Reading from the N-terminus, the 134-residue chain is D-ribose pyranase (134 aa).

Residue His20 is the Proton donor of the active site. Residues Asp28, His101, and Tyr123–Asn125 each bind substrate.

It belongs to the RbsD / FucU family. RbsD subfamily. In terms of assembly, homodecamer.

The protein localises to the cytoplasm. It catalyses the reaction beta-D-ribopyranose = beta-D-ribofuranose. It participates in carbohydrate metabolism; D-ribose degradation; D-ribose 5-phosphate from beta-D-ribopyranose: step 1/2. In terms of biological role, catalyzes the interconversion of beta-pyran and beta-furan forms of D-ribose. The chain is D-ribose pyranase from Pseudomonas fluorescens (strain SBW25).